The chain runs to 698 residues: Serine/threonine-protein kinase Nek8 (698 aa).

Positions 4-258 constitute a Protein kinase domain; sequence YERIRVVGRG…LSHIMAQPLC (255 aa). ATP contacts are provided by residues 10–18 and Lys33; that span reads VGRGAFGIV. Asp128 functions as the Proton acceptor in the catalytic mechanism. A Phosphothreonine; by autocatalysis modification is found at Thr162. A disordered region spans residues 281 to 307; sequence LTPGTPMAPGSTGSRATSARCRGVPRG. 5 RCC1 repeats span residues 415-466, 467-518, 520-571, 585-636, and 638-689; these read RGII…ALSA, DGEL…ILTS, GRVL…TLLC, SGAC…AIGA, and GEVY…LAVR.

It belongs to the protein kinase superfamily. NEK Ser/Thr protein kinase family. NIMA subfamily. Interacts with PKD2; may regulate PKD2 targeting to the cilium. Interacts with ANKS6. Component of a complex containing at least ANKS6, INVS, NEK8 and NPHP3. ANKS6 may organize complex assembly by linking INVS and NPHP3 to NEK8 and INVS may target it to the proximal ciliary axoneme. Interacts with ANKS3. Requires Mg(2+) as cofactor.

Its subcellular location is the cytoplasm. The protein localises to the cytoskeleton. It is found in the cell projection. It localises to the cilium. The protein resides in the cilium axoneme. Its subcellular location is the microtubule organizing center. The protein localises to the centrosome. The catalysed reaction is L-seryl-[protein] + ATP = O-phospho-L-seryl-[protein] + ADP + H(+). It catalyses the reaction L-threonyl-[protein] + ATP = O-phospho-L-threonyl-[protein] + ADP + H(+). Functionally, required for renal tubular integrity. May regulate local cytoskeletal structure in kidney tubule epithelial cells. May regulate ciliary biogenesis through targeting of proteins to the cilia. Plays a role in organogenesis and is involved in the regulation of the Hippo signaling pathway. The chain is Serine/threonine-protein kinase Nek8 (Nek8) from Rattus norvegicus (Rat).